A 496-amino-acid chain; its full sequence is Probable cytosol aminopeptidase (496 aa).

The Mn(2+) site is built by Lys251 and Asp256. Lys263 is an active-site residue. Positions 274, 333, and 335 each coordinate Mn(2+). Arg337 is a catalytic residue.

This sequence belongs to the peptidase M17 family. It depends on Mn(2+) as a cofactor.

The protein localises to the cytoplasm. It carries out the reaction Release of an N-terminal amino acid, Xaa-|-Yaa-, in which Xaa is preferably Leu, but may be other amino acids including Pro although not Arg or Lys, and Yaa may be Pro. Amino acid amides and methyl esters are also readily hydrolyzed, but rates on arylamides are exceedingly low.. The enzyme catalyses Release of an N-terminal amino acid, preferentially leucine, but not glutamic or aspartic acids.. Presumably involved in the processing and regular turnover of intracellular proteins. Catalyzes the removal of unsubstituted N-terminal amino acids from various peptides. The sequence is that of Probable cytosol aminopeptidase from Acidovorax sp. (strain JS42).